Consider the following 226-residue polypeptide: Thioredoxin domain-containing protein 9 (226 aa).

In terms of domain architecture, Thioredoxin spans 75-180; sequence EIGSERDFFQ…TTETLEWRLG (106 aa). Phosphoserine occurs at positions 188, 221, and 223.

In terms of assembly, forms ternary complexes with the chaperonin TCP1 complex, spanning the cylindrical chaperonin cavity and contacting at least 2 subunits.

The protein localises to the cytoplasm. It is found in the nucleus. The protein resides in the cytoskeleton. It localises to the microtubule organizing center. Its subcellular location is the centrosome. The protein localises to the midbody. Its function is as follows. Significantly diminishes the chaperonin TCP1 complex ATPase activity, thus negatively impacts protein folding, including that of actin or tubulin. The protein is Thioredoxin domain-containing protein 9 (Txndc9) of Rattus norvegicus (Rat).